Here is a 161-residue protein sequence, read N- to C-terminus: Ubiquitin-conjugating enzyme E2Q-like protein 1 (161 aa).

The UBC core domain maps to 1 to 154 (MKELQDIARL…VKTHEKYGWV (154 aa)). Catalysis depends on Cys-88, which acts as the Glycyl thioester intermediate.

The protein belongs to the ubiquitin-conjugating enzyme family. In terms of assembly, interacts with FBXW7.

Its subcellular location is the nucleus. The catalysed reaction is S-ubiquitinyl-[E1 ubiquitin-activating enzyme]-L-cysteine + [E2 ubiquitin-conjugating enzyme]-L-cysteine = [E1 ubiquitin-activating enzyme]-L-cysteine + S-ubiquitinyl-[E2 ubiquitin-conjugating enzyme]-L-cysteine.. Its pathway is protein modification; protein ubiquitination. In terms of biological role, probable E2 ubiquitin-protein ligase that catalyzes the covalent attachment of ubiquitin to target proteins. May facilitate the monoubiquitination and degradation of MTOR and CCNE1 through interaction with FBXW7. The sequence is that of Ubiquitin-conjugating enzyme E2Q-like protein 1 (UBE2QL1) from Homo sapiens (Human).